The following is a 54-amino-acid chain: MSSGQNSGGLMSSAGLVRYFDAEDRNSIRIDPKTIVAFGVLFGVGVLVLNALAI.

The Cytoplasmic segment spans residues 1-31 (MSSGQNSGGLMSSAGLVRYFDAEDRNSIRID). The helical transmembrane segment at 32–53 (PKTIVAFGVLFGVGVLVLNALA) threads the bilayer. A topological domain (extracellular) is located at residue Ile54.

This sequence belongs to the SEC61-beta family. As to quaternary structure, component of the protein translocase complex. Heterotrimer consisting of alpha (SecY), beta (SecG) and gamma (SecE) subunits. Can form oligomers of the heterotrimer.

The protein resides in the cell membrane. In terms of biological role, involved in protein export. The function of the beta subunit is unknown, but it may be involved in stabilization of the trimeric complex. The protein is Preprotein translocase subunit SecG of Haloquadratum walsbyi (strain DSM 16790 / HBSQ001).